The primary structure comprises 238 residues: Probable transcriptional regulatory protein Sde_1551 (238 aa).

It belongs to the TACO1 family.

The protein resides in the cytoplasm. The sequence is that of Probable transcriptional regulatory protein Sde_1551 from Saccharophagus degradans (strain 2-40 / ATCC 43961 / DSM 17024).